The chain runs to 543 residues: MSSTPAQDLARAVIDSLAPHVTDVVLCPGSRNSPLSLELLARQDLRVHVRIDERSASFLALSLARTQARPVAVVMTSGTAVANCLPAVAEAAHAHIPLIVLSADRPAHLVGTGASQTINQTGIFGDLAPTVGITELDQVAQIAESLAQRASQIPRHFNLALDVPLVAPELPELHGEAVGASWTHRWINHGEVTVDLGEHTLVIAGDEAWEVEGLEDVPTIAEPTAPKPYNPVHPLAAEILLKEQVSAEGYVVNTRPDHVIVVGHPTLHRGVLKLMSDPEIKLTVLSRTDIITDPGRHADQVGSTVKVTGTQEKQWLKICSAASELSADGVRDVLDNQEFGFTGLHVAAAVADTLGTGDTLFATASNPIRDLSLVGMPFDGVDTFSPRGVAGIDGSVAQAIGTALAVQSRHPDEIRAPRTVALLGDLSFLHDIGGLLIGPDEPRPENLTIVVANDNGGGIFELLETGADGLRPNFERAFGTPHDASIADLCAGYGIEHQAVDNLQDLIIALVDTTEVSGFTVIEASTVRDTRRAQQQALMTKVR.

The protein belongs to the TPP enzyme family. MenD subfamily. Homodimer. Mg(2+) is required as a cofactor. Mn(2+) serves as cofactor. The cofactor is thiamine diphosphate.

The catalysed reaction is isochorismate + 2-oxoglutarate + H(+) = 5-enolpyruvoyl-6-hydroxy-2-succinyl-cyclohex-3-ene-1-carboxylate + CO2. It functions in the pathway quinol/quinone metabolism; 1,4-dihydroxy-2-naphthoate biosynthesis; 1,4-dihydroxy-2-naphthoate from chorismate: step 2/7. Its pathway is quinol/quinone metabolism; menaquinone biosynthesis. Functionally, catalyzes the thiamine diphosphate-dependent decarboxylation of 2-oxoglutarate and the subsequent addition of the resulting succinic semialdehyde-thiamine pyrophosphate anion to isochorismate to yield 2-succinyl-5-enolpyruvyl-6-hydroxy-3-cyclohexene-1-carboxylate (SEPHCHC). The sequence is that of 2-succinyl-5-enolpyruvyl-6-hydroxy-3-cyclohexene-1-carboxylate synthase from Corynebacterium glutamicum (strain R).